Here is a 170-residue protein sequence, read N- to C-terminus: Methanogen homoaconitase small subunit (170 aa).

A YLRT motif is present at residues 24-27; sequence YLRT.

This sequence belongs to the LeuD family. LeuD type 2 subfamily. Heterotetramer of 2 HacA and 2 HacB proteins. Cannot form a complex with LeuC.

The enzyme catalyses (2R)-homocitrate = (2R,3S)-homoisocitrate. It catalyses the reaction (2R)-homocitrate = cis-homoaconitate + H2O. The catalysed reaction is (2R,3S)-homoisocitrate = cis-homoaconitate + H2O. It carries out the reaction cis-(homo)2aconitate + H2O = (2R,3S)-iso(homo)2citrate. The enzyme catalyses cis-(homo)3aconitate + H2O = (2R,3S)-iso(homo)3citrate. It catalyses the reaction (R)-malate = maleate + H2O. The catalysed reaction is cis-aconitate + H2O = D-threo-isocitrate. Its pathway is organic acid metabolism; 2-oxosuberate biosynthesis. In terms of biological role, component of a hydro-lyase with broad substrate specificity for cis-unsaturated tricarboxylic acids. Catalyzes both the reversible dehydration of (R)-homocitrate ((R)-2-hydroxybutane-1,2,4-tricarboxylate) to produce cis-homoaconitate ((Z)-but-1-ene-1,2,4-tricarboxylate), and its hydration to homoisocitrate ((1R,2S)-1-hydroxybutane-1,2,4-tricarboxylate). Is also able to hydrate the analogous longer chain substrates cis-homo(2)-aconitate, cis-homo(3)-aconitate, and even the non-physiological cis-homo(4)-aconitate with similar efficiency. These reactions are part of the biosynthesis pathway of coenzyme B. Can also catalyze the hydration of maleate to (R)-malate, and that of cis-aconitate. Cannot catalyze the hydration of citraconate and the dehydration of (S)-homocitrate, citramalate, 2-isopropylmalate, 3-isopropylmalate, citrate or threo-DL-isocitrate. The polypeptide is Methanogen homoaconitase small subunit (hacB) (Methanocaldococcus jannaschii (strain ATCC 43067 / DSM 2661 / JAL-1 / JCM 10045 / NBRC 100440) (Methanococcus jannaschii)).